The chain runs to 140 residues: Transcription antitermination protein NusB (140 aa).

It belongs to the NusB family.

Involved in transcription antitermination. Required for transcription of ribosomal RNA (rRNA) genes. Binds specifically to the boxA antiterminator sequence of the ribosomal RNA (rrn) operons. This Leptospira biflexa serovar Patoc (strain Patoc 1 / Ames) protein is Transcription antitermination protein NusB.